The primary structure comprises 311 residues: tRNA-cytidine(32) 2-sulfurtransferase (311 aa).

The PP-loop motif signature appears at 47-52; the sequence is SGGKDS. Cys122, Cys125, and Cys213 together coordinate [4Fe-4S] cluster.

The protein belongs to the TtcA family. Homodimer. It depends on Mg(2+) as a cofactor. [4Fe-4S] cluster is required as a cofactor.

The protein resides in the cytoplasm. It catalyses the reaction cytidine(32) in tRNA + S-sulfanyl-L-cysteinyl-[cysteine desulfurase] + AH2 + ATP = 2-thiocytidine(32) in tRNA + L-cysteinyl-[cysteine desulfurase] + A + AMP + diphosphate + H(+). Its pathway is tRNA modification. Functionally, catalyzes the ATP-dependent 2-thiolation of cytidine in position 32 of tRNA, to form 2-thiocytidine (s(2)C32). The sulfur atoms are provided by the cysteine/cysteine desulfurase (IscS) system. In Escherichia coli O157:H7, this protein is tRNA-cytidine(32) 2-sulfurtransferase.